The sequence spans 281 residues: MDFFITNGTRLLEKELTAGSGQITYDVNKNIFGLPILKRRENQGNPTLFPTYDNYSHILSFIKSLSIPATYKTQVYTFAWTHSSVDPKNTIYTHLTTQIPAVKANSLGTASKVVQGPGHTGGDLIDFKDHFKITCQHSNFQQSYFIRIRYASNGSANTRAVINLSIPGVAELGMALNPTFSGTDYTNLKYKDFQYLEFSNEVKFAPNQNISLVFNRSDVYTNTTVLIDKIEFLPITRSIREDREKQKLETVQQIINTFYANPIKNTLQSELTDYDIDQAAN.

Antigenic epitope stretches follow at residues 54-78 (NYSH…VYTF), 91-104 (IYTH…AVKA), 108-116 (GTASKVVQG), 131-148 (FKIT…FIRI), 160-172 (AVIN…VAEL), 189-196 (KYKDFQYL), 208-216 (QNISLVFNR), 221-236 (TNTT…LPIT), and 247-256 (KLETVQQIIN).

The protein belongs to the delta endotoxin family.

Its function is as follows. Promotes colloidosmotic lysis by binding to the midgut epithelial cells of insects. Active against Mamestra brassicae. This is Insecticidal crystal toxin protein from Bacillus thuringiensis subsp. kurstaki.